The chain runs to 1755 residues: Transposon Ty1-DR6 Gag-Pol polyprotein (1755 aa).

Composition is skewed to polar residues over residues 1 to 23 (MESQQLSQHSPISHGSACASVTS), 48 to 60 (TKANSQQTTTPAS), and 127 to 152 (QSQFPQYPSSVGTPLSTPSPESGNTF). 3 disordered regions span residues 1–93 (MESQ…MMTQ), 126–174 (PQSQ…PPPM), and 352–421 (GSRN…SKST). Positions 153–165 (TDSSSADSDMTST) are enriched in low complexity. The segment at 299–401 (NNGIHINNKV…NSKSKTARAH (103 aa)) is RNA-binding. Over residues 402–418 (NVSTSNNSPSTDNDSIS) the composition is skewed to low complexity. Ser-416 is modified (phosphoserine). Residue Asp-461 is the For protease activity; shared with dimeric partner of the active site. Residues 583-640 (NVHTSESTRKYPYPFIHRMLAHANAQTIRYSLKNNTITYFNESDVDWSSAIDYQCPDC) form an integrase-type zinc finger-like region. Positions 660–835 (NSYEPFQYLH…AGLDISTLLP (176 aa)) constitute an Integrase catalytic domain. The Mg(2+) site is built by Asp-671 and Asp-736. Disordered regions lie at residues 956-1087 (SKAV…ETEK), 1092-1111 (RSPSIDASPPENNSSHNIVP), and 1130-1187 (DLPL…DNET). The span at 960–969 (SPTDSTPPST) shows a compositional bias: low complexity. Residues 1005 to 1015 (STPQISNIEST) are compositionally biased toward polar residues. A compositionally biased stretch (basic and acidic residues) spans 1038–1053 (ESSHASKSKDFRHSDS). Polar residues-rich tracts occupy residues 1054–1082 (YSENETNHTNVPISSTGGTNNKTVPQISD) and 1101–1111 (PENNSSHNIVP). Positions 1178–1212 (KKRSLEDNETEIKVSRDTWNTKNMRSLEPPRSKKR) match the Bipartite nuclear localization signal motif. One can recognise a Reverse transcriptase Ty1/copia-type domain in the interval 1338 to 1476 (NNYYITQLDI…DILGLEIKYQ (139 aa)). Mg(2+)-binding residues include Asp-1346, Asp-1427, Asp-1428, Asp-1610, Glu-1652, and Asp-1685. In terms of domain architecture, RNase H Ty1/copia-type spans 1610–1752 (DASYGNQPYY…IKTFKLLTNK (143 aa)).

As to quaternary structure, the capsid protein forms a homotrimer, from which the VLPs are assembled. The protease is a homodimer, whose active site consists of two apposed aspartic acid residues. Initially, virus-like particles (VLPs) are composed of the structural unprocessed proteins Gag and Gag-Pol, and also contain the host initiator methionine tRNA (tRNA(i)-Met) which serves as a primer for minus-strand DNA synthesis, and a dimer of genomic Ty RNA. Processing of the polyproteins occurs within the particle and proceeds by an ordered pathway, called maturation. First, the protease (PR) is released by autocatalytic cleavage of the Gag-Pol polyprotein yielding capsid protein p45 and a Pol-p154 precursor protein. This cleavage is a prerequisite for subsequent processing of Pol-p154 at the remaining sites to release the mature structural and catalytic proteins. Maturation takes place prior to the RT reaction and is required to produce transposition-competent VLPs.

The protein resides in the cytoplasm. The protein localises to the nucleus. It carries out the reaction DNA(n) + a 2'-deoxyribonucleoside 5'-triphosphate = DNA(n+1) + diphosphate. The enzyme catalyses Endonucleolytic cleavage to 5'-phosphomonoester.. Functionally, capsid protein (CA) is the structural component of the virus-like particle (VLP), forming the shell that encapsulates the retrotransposons dimeric RNA genome. The particles are assembled from trimer-clustered units and there are holes in the capsid shells that allow for the diffusion of macromolecules. CA also has nucleocapsid-like chaperone activity, promoting primer tRNA(i)-Met annealing to the multipartite primer-binding site (PBS), dimerization of Ty1 RNA and initiation of reverse transcription. In terms of biological role, the aspartyl protease (PR) mediates the proteolytic cleavages of the Gag and Gag-Pol polyproteins after assembly of the VLP. Reverse transcriptase/ribonuclease H (RT) is a multifunctional enzyme that catalyzes the conversion of the retro-elements RNA genome into dsDNA within the VLP. The enzyme displays a DNA polymerase activity that can copy either DNA or RNA templates, and a ribonuclease H (RNase H) activity that cleaves the RNA strand of RNA-DNA heteroduplexes during plus-strand synthesis and hydrolyzes RNA primers. The conversion leads to a linear dsDNA copy of the retrotransposon that includes long terminal repeats (LTRs) at both ends. Its function is as follows. Integrase (IN) targets the VLP to the nucleus, where a subparticle preintegration complex (PIC) containing at least integrase and the newly synthesized dsDNA copy of the retrotransposon must transit the nuclear membrane. Once in the nucleus, integrase performs the integration of the dsDNA into the host genome. In Saccharomyces cerevisiae (strain ATCC 204508 / S288c) (Baker's yeast), this protein is Transposon Ty1-DR6 Gag-Pol polyprotein (TY1B-DR6).